The following is a 559-amino-acid chain: MGEVKSDIEIARAARKQPIMEVGAKLGIPPEHLLPYGHDKAKVSAEFIAAQNEKRNGRLILVTAINPTPAGEGKTTTTVGLGDGLNRIGKKAIVCIREASLGPCFGIKGGAAGGGYAQVVPMEDINLHFTGDFHAITSAHNLLSALIDNHIYWGNEQAIDIRRIAWRRVMDMNDRALRQIVGSLGGVANGYPRETGFDITVASEVMAILCLAMDIKDLEKRLGNIIIGYRRDKSPVFARDIKADGAMAVLLKDAMQPNLVQTLENNPAFVHGGPFANIAHGCNSVVATTTALKLADYVVTEAGFGADLGAEKFFDIKCRKAGLTPDAAVIVATVRAIKMNGGVKREDLGRESVEAVRKGCANLGRHIQNVKKFGVPVLVAINHFTSDTEAEVRAIKDYVRTLGSEAVLCKHWAEGSAGIEELAYKVVDLANAGHSQFSPLYPDEMPLFQKIETIAKDIYHASEVIADKLVREQLRTWEDQGYGDLPICMAKTQYSFSTDPNLRGAPTGHAVPIREVRLAAGAGFIVVITGEIMTMPGLPKVPSSERIRLNEQGYIEGLF.

An ATP-binding site is contributed by 68 to 75 (TPAGEGKT).

Belongs to the formate--tetrahydrofolate ligase family.

It carries out the reaction (6S)-5,6,7,8-tetrahydrofolate + formate + ATP = (6R)-10-formyltetrahydrofolate + ADP + phosphate. The protein operates within one-carbon metabolism; tetrahydrofolate interconversion. The chain is Formate--tetrahydrofolate ligase from Rhizobium meliloti (strain 1021) (Ensifer meliloti).